Reading from the N-terminus, the 57-residue chain is Granulin-1 (57 aa).

Intrachain disulfides connect Cys4/Cys16 and Cys10/Cys26.

Belongs to the granulin family. In terms of processing, granulins are disulfide bridged. As to expression, ubiquitous.

It is found in the secreted. Functionally, granulins have possible cytokine-like activity. They may play a role in inflammation, wound repair, and tissue remodeling. This is Granulin-1 from Cyprinus carpio (Common carp).